Here is a 97-residue protein sequence, read N- to C-terminus: Aspartyl/glutamyl-tRNA(Asn/Gln) amidotransferase subunit C (97 aa).

It belongs to the GatC family. In terms of assembly, heterotrimer of A, B and C subunits.

The catalysed reaction is L-glutamyl-tRNA(Gln) + L-glutamine + ATP + H2O = L-glutaminyl-tRNA(Gln) + L-glutamate + ADP + phosphate + H(+). The enzyme catalyses L-aspartyl-tRNA(Asn) + L-glutamine + ATP + H2O = L-asparaginyl-tRNA(Asn) + L-glutamate + ADP + phosphate + 2 H(+). Its function is as follows. Allows the formation of correctly charged Asn-tRNA(Asn) or Gln-tRNA(Gln) through the transamidation of misacylated Asp-tRNA(Asn) or Glu-tRNA(Gln) in organisms which lack either or both of asparaginyl-tRNA or glutaminyl-tRNA synthetases. The reaction takes place in the presence of glutamine and ATP through an activated phospho-Asp-tRNA(Asn) or phospho-Glu-tRNA(Gln). The polypeptide is Aspartyl/glutamyl-tRNA(Asn/Gln) amidotransferase subunit C (Synechococcus sp. (strain CC9902)).